Reading from the N-terminus, the 231-residue chain is Putative carboxymethylenebutenolidase (231 aa).

Active-site residues include Asp169 and His200.

Belongs to the dienelactone hydrolase family.

The enzyme catalyses 2-(5-oxo-2,5-dihydrofuran-2-ylidene)acetate + H2O = 4-oxohex-2-enedioate + H(+). This chain is Putative carboxymethylenebutenolidase, found in Azospirillum brasilense.